We begin with the raw amino-acid sequence, 372 residues long: N-methyl-L-tryptophan oxidase (372 aa).

4-34 (DLIIIGSGSVGAAAGYYATRAGLNVLMTDAH) serves as a coordination point for FAD. At C308 the chain carries S-8alpha-FAD cysteine.

It belongs to the MSOX/MTOX family. MTOX subfamily. In terms of assembly, monomer. FAD is required as a cofactor.

The enzyme catalyses N(alpha)-methyl-L-tryptophan + O2 + H2O = L-tryptophan + formaldehyde + H2O2. In terms of biological role, catalyzes the oxidative demethylation of N-methyl-L-tryptophan. The sequence is that of N-methyl-L-tryptophan oxidase from Escherichia coli O6:H1 (strain CFT073 / ATCC 700928 / UPEC).